A 146-amino-acid polypeptide reads, in one-letter code: Prefoldin subunit alpha (146 aa).

It belongs to the prefoldin alpha subunit family. As to quaternary structure, heterohexamer of two alpha and four beta subunits.

It is found in the cytoplasm. Functionally, molecular chaperone capable of stabilizing a range of proteins. Seems to fulfill an ATP-independent, HSP70-like function in archaeal de novo protein folding. The protein is Prefoldin subunit alpha of Methanococcus vannielii (strain ATCC 35089 / DSM 1224 / JCM 13029 / OCM 148 / SB).